Here is a 517-residue protein sequence, read N- to C-terminus: Probable cytosol aminopeptidase (517 aa).

The Mn(2+) site is built by Lys-279 and Asp-284. Residue Lys-291 is part of the active site. 3 residues coordinate Mn(2+): Asp-302, Asp-361, and Glu-363. Arg-365 is a catalytic residue.

This sequence belongs to the peptidase M17 family. Requires Mn(2+) as cofactor.

Its subcellular location is the cytoplasm. It carries out the reaction Release of an N-terminal amino acid, Xaa-|-Yaa-, in which Xaa is preferably Leu, but may be other amino acids including Pro although not Arg or Lys, and Yaa may be Pro. Amino acid amides and methyl esters are also readily hydrolyzed, but rates on arylamides are exceedingly low.. The enzyme catalyses Release of an N-terminal amino acid, preferentially leucine, but not glutamic or aspartic acids.. Presumably involved in the processing and regular turnover of intracellular proteins. Catalyzes the removal of unsubstituted N-terminal amino acids from various peptides. The chain is Probable cytosol aminopeptidase from Streptomyces coelicolor (strain ATCC BAA-471 / A3(2) / M145).